The chain runs to 355 residues: Phosphoserine aminotransferase (355 aa).

Arg-41 contributes to the L-glutamate binding site. Residues 75–76 (AS), Trp-99, Thr-147, Asp-166, and Gln-189 contribute to the pyridoxal 5'-phosphate site. The residue at position 190 (Lys-190) is an N6-(pyridoxal phosphate)lysine. Residue 231-232 (NT) coordinates pyridoxal 5'-phosphate.

The protein belongs to the class-V pyridoxal-phosphate-dependent aminotransferase family. SerC subfamily. As to quaternary structure, homodimer. Pyridoxal 5'-phosphate is required as a cofactor.

It localises to the cytoplasm. The enzyme catalyses O-phospho-L-serine + 2-oxoglutarate = 3-phosphooxypyruvate + L-glutamate. It catalyses the reaction 4-(phosphooxy)-L-threonine + 2-oxoglutarate = (R)-3-hydroxy-2-oxo-4-phosphooxybutanoate + L-glutamate. It functions in the pathway amino-acid biosynthesis; L-serine biosynthesis; L-serine from 3-phospho-D-glycerate: step 2/3. Its pathway is cofactor biosynthesis; pyridoxine 5'-phosphate biosynthesis; pyridoxine 5'-phosphate from D-erythrose 4-phosphate: step 3/5. In terms of biological role, catalyzes the reversible conversion of 3-phosphohydroxypyruvate to phosphoserine and of 3-hydroxy-2-oxo-4-phosphonooxybutanoate to phosphohydroxythreonine. This Parabacteroides distasonis (strain ATCC 8503 / DSM 20701 / CIP 104284 / JCM 5825 / NCTC 11152) protein is Phosphoserine aminotransferase.